The primary structure comprises 428 residues: uncharacterized protein (428 aa).

His68 serves as a coordination point for Zn(2+). Glu71 acts as the Proton acceptor in catalysis. Zn(2+) contacts are provided by His72 and Glu143.

It belongs to the peptidase M16 family. Requires Zn(2+) as cofactor.

This is an uncharacterized protein from Bacillus subtilis (strain 168).